The following is a 489-amino-acid chain: 2-(3-amino-3-carboxypropyl)histidine synthase subunit 2 (489 aa).

Residue Met1 is modified to N-acetylmethionine. Residue Ser7 is modified to Phosphoserine. Positions 89, 110, and 341 each coordinate [4Fe-4S] cluster. Ser446 is modified (phosphoserine). At Thr467 the chain carries Phosphothreonine. Ser488 carries the post-translational modification Phosphoserine.

Belongs to the DPH1/DPH2 family. DPH2 subfamily. As to quaternary structure, component of the 2-(3-amino-3-carboxypropyl)histidine synthase complex composed of DPH1, DPH2, DPH3 and a NADH-dependent reductase. Interacts with DPH1. It depends on [4Fe-4S] cluster as a cofactor.

It participates in protein modification; peptidyl-diphthamide biosynthesis. Its function is as follows. Required for the first step of diphthamide biosynthesis, a post-translational modification of histidine which occurs in elongation factor 2. DPH1 and DPH2 transfer a 3-amino-3-carboxypropyl (ACP) group from S-adenosyl-L-methionine (SAM) to a histidine residue, the reaction is assisted by a reduction system comprising DPH3 and a NADH-dependent reductase. Facilitates the reduction of the catalytic iron-sulfur cluster found in the DPH1 subunit. The sequence is that of 2-(3-amino-3-carboxypropyl)histidine synthase subunit 2 (Dph2) from Mus musculus (Mouse).